The sequence spans 452 residues: MSLMQFSGLLVVWLLSTLFIATLTWFEFRRVRFNFNVFFSLLFLLTFFFGFPLTSVLVFRFDVGVAPPEILLQALLSAACFYGVYYVTYKTRLRKRVVDVPRKPLFTMNRVETHLTWVILMGIALVSVAIFFMHNGFLLFRLHSYSQIFSSEVSGVALKRFFYFFIPAMLVVYFLRQDSKAWLFFLVSTVAFGLLTYMIVGGTRANIIIAFAIFLFIGIIRGWISLWMLAAAGVLGIVGMFWLALKRYGLNVSGDEAFYTFLYLTRDTFSPWENLALLLQNYHNIDFQGLAPIVRDFYVFIPTWLWPGRPSIVLNSANYFTWEVLNNHSGLAISPTLIGSLVVMGGALFIPLGAIVVGLIIKWFDWLYELGNREPNRYKAAILHSFCFGAIFNMIVLVREGLDSFVSRVVFFLVVFGASLLVAKLLFWLFDSAGLIHKRTTSLPQAQVEGKL.

11 helical membrane-spanning segments follow: residues 6 to 26, 37 to 57, 63 to 83, 118 to 138, 155 to 175, 181 to 201, 207 to 227, 228 to 248, 341 to 361, 378 to 398, and 410 to 430; these read FSGL…LTWF, VFFS…TSVL, VGVA…CFYG, VILM…NGFL, GVAL…VYFL, AWLF…MIVG, IIIA…ISLW, MLAA…LKRY, LVVM…GLII, YKAA…IVLV, and VFFL…FWLF.

It belongs to the WzyE family. In terms of assembly, probably part of a complex composed of WzxE, WzyE and WzzE.

It localises to the cell inner membrane. Its pathway is bacterial outer membrane biogenesis; enterobacterial common antigen biosynthesis. Functionally, probably involved in the polymerization of enterobacterial common antigen (ECA) trisaccharide repeat units. This chain is Probable ECA polymerase, found in Salmonella gallinarum (strain 287/91 / NCTC 13346).